A 717-amino-acid chain; its full sequence is ATP-dependent RNA helicase homolog DQX1 (717 aa).

In terms of domain architecture, Helicase ATP-binding spans 57 to 225; that stretch reads QLESNPTGVV…WGNPPIVHIP (169 aa). Residue 70–77 coordinates ATP; that stretch reads GEPGSGKS. Positions 170–173 match the DEAQ box motif; the sequence is DEAQ. The region spanning 248–447 is the Helicase C-terminal domain; that stretch reads ACQAVLELCR…ALMQALEDLD (200 aa). Residues 694-717 form a disordered region; that stretch reads GMADSTAGSKSSSAQEFRDPCVLQ. A compositionally biased stretch (polar residues) spans 699 to 708; sequence TAGSKSSSAQ.

Its subcellular location is the nucleus. Might be involved in RNA metabolism; it is missing helicase motif III and may not have helicase activity. In Homo sapiens (Human), this protein is ATP-dependent RNA helicase homolog DQX1 (DQX1).